A 260-amino-acid polypeptide reads, in one-letter code: MGKFPSWVLVADWPPPPGVMALSTLRDGPGVSVAPFDRLNLGNCSGVAGDAPVCVERNRSRLVQMLGLPSVPHWLRQVHGVEVLRVDVLPQSIARVVEPTADAAVTSVAGAVLVILTADCLPVVLAAVDGSEIGVVHAGWRGLADDVLERTVAALRTSPECLQAWLGPAAGPQAYEVGVDVYAAFVERDSGAACAFSVTRPGHWYVDLYALARQRLMRAGLSAVSIYGGGLCTISDPQRFFSHRRDRRSGRFATLAWIGC.

The Zn(2+) site is built by His-79, Cys-120, and His-137.

The protein belongs to the purine nucleoside phosphorylase YfiH/LACC1 family. Homodimer. Cu(2+) serves as cofactor. It depends on Zn(2+) as a cofactor.

It catalyses the reaction adenosine + phosphate = alpha-D-ribose 1-phosphate + adenine. The catalysed reaction is S-methyl-5'-thioadenosine + phosphate = 5-(methylsulfanyl)-alpha-D-ribose 1-phosphate + adenine. The enzyme catalyses inosine + phosphate = alpha-D-ribose 1-phosphate + hypoxanthine. It carries out the reaction adenosine + H2O + H(+) = inosine + NH4(+). Functionally, purine nucleoside enzyme that catalyzes the phosphorolysis of adenosine and inosine nucleosides, yielding D-ribose 1-phosphate and the respective free bases, adenine and hypoxanthine. Also catalyzes the phosphorolysis of S-methyl-5'-thioadenosine into adenine and S-methyl-5-thio-alpha-D-ribose 1-phosphate. Also has adenosine deaminase activity. In Xylella fastidiosa (strain Temecula1 / ATCC 700964), this protein is Purine nucleoside phosphorylase PD_1754.